The chain runs to 476 residues: Zinc finger protein 563 (476 aa).

In terms of domain architecture, KRAB spans 4-96; that stretch reads VAFEDVAVNF…IRDSIVNNSI (93 aa). A C2H2-type 1; degenerate zinc finger spans residues 101–125; the sequence is DPCQSAECEEVIMGHLSLNSHIRVD. The C2H2-type 2; degenerate zinc finger occupies 169 to 191; it reads YECKECGKTFSSRRNLRRHMVVQ. 10 C2H2-type zinc fingers span residues 197–219, 225–247, 253–275, 281–303, 309–331, 337–359, 365–387, 393–415, 421–443, and 449–471; these read YKCK…ERTH, YECK…ERMH, YECK…ERTH, YTCK…ETTH, YECK…MKRH, HKCK…ERIH, YECK…MIMH, HKCK…EKSH, YECK…MVMH, and NKCK…EKTH.

Belongs to the krueppel C2H2-type zinc-finger protein family.

It localises to the nucleus. Functionally, may be involved in transcriptional regulation. The polypeptide is Zinc finger protein 563 (ZNF563) (Homo sapiens (Human)).